Reading from the N-terminus, the 104-residue chain is Disrupted in renal carcinoma protein 1 (104 aa).

Positions 1–23 (MPEAHMQPAKLQTSLPTTDHGSK) are disordered. The span at 10-19 (KLQTSLPTTD) shows a compositional bias: polar residues.

As to expression, expressed at low steady-state level in adult placenta, testis, ovary, prostate, fetal kidney, spleen and skeletal muscle.

This Homo sapiens (Human) protein is Disrupted in renal carcinoma protein 1 (DIRC1).